A 361-amino-acid polypeptide reads, in one-letter code: 5-formaminoimidazole-4-carboxamide-1-(beta)-D-ribofuranosyl 5'-monophosphate synthetase (361 aa).

The 5-amino-1-(5-phospho-beta-D-ribosyl)imidazole-4-carboxamide site is built by His27 and Ser94. The ATP-grasp domain maps to 116–348; it reads RQILRWEAER…MGQRIAKEIK (233 aa). ATP is bound by residues 146–208 and Glu230; that span reads PDEI…TNYC. Residue Asn258 coordinates 5-amino-1-(5-phospho-beta-D-ribosyl)imidazole-4-carboxamide. Mg(2+)-binding residues include Gln297 and Glu310.

This sequence belongs to the phosphohexose mutase family. Mg(2+) serves as cofactor. It depends on Mn(2+) as a cofactor.

The enzyme catalyses 5-amino-1-(5-phospho-beta-D-ribosyl)imidazole-4-carboxamide + formate + ATP = 5-formamido-1-(5-phospho-D-ribosyl)imidazole-4-carboxamide + ADP + phosphate. It participates in purine metabolism; IMP biosynthesis via de novo pathway; 5-formamido-1-(5-phospho-D-ribosyl)imidazole-4-carboxamide from 5-amino-1-(5-phospho-D-ribosyl)imidazole-4-carboxamide (formate route): step 1/1. Catalyzes the ATP- and formate-dependent formylation of 5-aminoimidazole-4-carboxamide-1-beta-d-ribofuranosyl 5'-monophosphate (AICAR) to 5-formaminoimidazole-4-carboxamide-1-beta-d-ribofuranosyl 5'-monophosphate (FAICAR) in the absence of folates. This Methanococcus aeolicus (strain ATCC BAA-1280 / DSM 17508 / OCM 812 / Nankai-3) protein is 5-formaminoimidazole-4-carboxamide-1-(beta)-D-ribofuranosyl 5'-monophosphate synthetase.